The primary structure comprises 391 residues: 3-ketoacyl-CoA thiolase (391 aa).

C95 functions as the Acyl-thioester intermediate in the catalytic mechanism. Residues H347 and C377 each act as proton acceptor in the active site.

It belongs to the thiolase-like superfamily. Thiolase family. Heterotetramer of two alpha chains (FadB) and two beta chains (FadA).

It localises to the cytoplasm. The enzyme catalyses an acyl-CoA + acetyl-CoA = a 3-oxoacyl-CoA + CoA. It participates in lipid metabolism; fatty acid beta-oxidation. In terms of biological role, catalyzes the final step of fatty acid oxidation in which acetyl-CoA is released and the CoA ester of a fatty acid two carbons shorter is formed. The protein is 3-ketoacyl-CoA thiolase of Stutzerimonas stutzeri (strain A1501) (Pseudomonas stutzeri).